The sequence spans 318 residues: Leucine-rich repeat domain-containing protein YddK (318 aa).

LRR repeat units follow at residues 109–129 (NFTS…TNYD), 130–151 (RLVK…QGRN), 153–173 (SITH…DRLS), 174–194 (SVTY…ESCE), 195–216 (WLQY…NKNE), 217–237 (LLLL…LFPN), 238–258 (LNTL…YSNF), 260–280 (NVQT…DFLT), and 284–305 (SIKS…NTSD).

This Escherichia coli (strain K12) protein is Leucine-rich repeat domain-containing protein YddK (yddK).